A 445-amino-acid chain; its full sequence is Chromosomal replication initiator protein DnaA (445 aa).

The domain I, interacts with DnaA modulators stretch occupies residues 1–73 (MSPNSTLWQT…NELATKYSST (73 aa)). The tract at residues 73 to 102 (TPVRLKFVSQEEVIEEPVADRKLTIDYRQG) is domain II. The domain III, AAA+ region stretch occupies residues 103 to 323 (NLNSTYTFDS…GALIRLISYA (221 aa)). Positions 147, 149, 150, and 151 each coordinate ATP. The tract at residues 324–445 (QTFNLEITMN…KFAVDSIVKK (122 aa)) is domain IV, binds dsDNA.

The protein belongs to the DnaA family. In terms of assembly, oligomerizes as a right-handed, spiral filament on DNA at oriC.

It is found in the cytoplasm. Its function is as follows. Plays an essential role in the initiation and regulation of chromosomal replication. ATP-DnaA binds to the origin of replication (oriC) to initiate formation of the DNA replication initiation complex once per cell cycle. Binds the DnaA box (a 9 base pair repeat at the origin) and separates the double-stranded (ds)DNA. Forms a right-handed helical filament on oriC DNA; dsDNA binds to the exterior of the filament while single-stranded (ss)DNA is stabiized in the filament's interior. The ATP-DnaA-oriC complex binds and stabilizes one strand of the AT-rich DNA unwinding element (DUE), permitting loading of DNA polymerase. After initiation quickly degrades to an ADP-DnaA complex that is not apt for DNA replication. Binds acidic phospholipids. In Acholeplasma laidlawii, this protein is Chromosomal replication initiator protein DnaA.